Reading from the N-terminus, the 680-residue chain is UvrABC system protein C (680 aa).

The 79-residue stretch at Asn-66–Val-144 folds into the GIY-YIG domain. Residues Gln-254–Val-289 enclose the UVR domain.

The protein belongs to the UvrC family. As to quaternary structure, interacts with UvrB in an incision complex.

It is found in the cytoplasm. The UvrABC repair system catalyzes the recognition and processing of DNA lesions. UvrC both incises the 5' and 3' sides of the lesion. The N-terminal half is responsible for the 3' incision and the C-terminal half is responsible for the 5' incision. This chain is UvrABC system protein C, found in Rhizobium johnstonii (strain DSM 114642 / LMG 32736 / 3841) (Rhizobium leguminosarum bv. viciae).